We begin with the raw amino-acid sequence, 218 residues long: Glutathione S-transferase Mu 4 (218 aa).

The GST N-terminal domain maps to 1–88 (MPMTLGYWDI…YIARKHNLCG (88 aa)). Glutathione is bound by residues 7-8 (YW), 46-50 (WLSEK), 59-60 (NL), and 72-73 (QS). The GST C-terminal domain maps to 90–208 (TEEEKIRVDI…KTSRFLRTPL (119 aa)). Tyr116 is a substrate binding site.

It belongs to the GST superfamily. Mu family. As to quaternary structure, homodimer. Widely expressed.

It localises to the cytoplasm. It catalyses the reaction RX + glutathione = an S-substituted glutathione + a halide anion + H(+). It carries out the reaction 1-chloro-2,4-dinitrobenzene + glutathione = 2,4-dinitrophenyl-S-glutathione + chloride + H(+). The enzyme catalyses (13S,14S)-epoxy-(4Z,7Z,9E,11E,16Z,19Z)-docosahexaenoate + glutathione = (13R)-S-glutathionyl-(14S)-hydroxy-(4Z,7Z,9E,11E,16Z,19Z)-docosahexaenoate. The catalysed reaction is leukotriene C4 = leukotriene A4 + glutathione. Functionally, conjugation of reduced glutathione to a wide number of exogenous and endogenous hydrophobic electrophiles. Catalyzes the conjugation of leukotriene A4 with reduced glutathione (GSH) to form leukotriene C4. Can also catalyze the transfer of a glutathionyl group from glutathione (GSH) to 13(S),14(S)-epoxy-docosahexaenoic acid to form maresin conjugate in tissue regeneration 1 (MCTR1), a bioactive lipid mediator that possess potent anti-inflammatory and proresolving actions. The chain is Glutathione S-transferase Mu 4 from Mus musculus (Mouse).